Reading from the N-terminus, the 159-residue chain is MSTEMMTTEPVPPLELSDDILGKLDPQCSPSDDLSDQFIKDCDLKKKPRKGKNVQATLNVESDQKKPRRKDTPAVHIPPFIPGVISEHLIKRYDVQERIPKAKSGPALHNSDMEQKRPRRKDTPALHMPPFVAGLTLLRDESAGVILEDEEMDGDKLAI.

Disordered stretches follow at residues 1-79 and 98-127; these read MSTE…HIPP and RIPK…PALH. 2 stretches are compositionally biased toward basic and acidic residues: residues 62–73 and 111–124; these read SDQKKPRRKDTP and SDME…KDTP. T72 and T123 each carry phosphothreonine; by PKG/PRKG1.

In terms of processing, substrate for cGMP-dependent protein kinase. Phosphorylation of Thr-72 and Thr-123 is required for its phosphatase activity. Phosphorylated by PRKG1 isoform alpha. Expressed in Purkinje cells of the cerebellum, hippocampus, pons, medulla and eye.

Inhibits phosphatase activities of protein phosphatase 1 (PP1) and protein phosphatase 2A (PP2A) complexes. This Mus musculus (Mouse) protein is Protein phosphatase 1 regulatory subunit 17 (Ppp1r17).